Here is a 291-residue protein sequence, read N- to C-terminus: Bis(5'-nucleosyl)-tetraphosphatase, symmetrical (291 aa).

This sequence belongs to the Ap4A hydrolase family.

The catalysed reaction is P(1),P(4)-bis(5'-adenosyl) tetraphosphate + H2O = 2 ADP + 2 H(+). Functionally, hydrolyzes diadenosine 5',5'''-P1,P4-tetraphosphate to yield ADP. The polypeptide is Bis(5'-nucleosyl)-tetraphosphatase, symmetrical (Pseudomonas syringae pv. syringae (strain B728a)).